The chain runs to 105 residues: Protein RALF-like 21 (105 aa).

A signal peptide spans 1–30 (MSNMKITNRFMLVATFIACVFISSMNMTVG). Intrachain disulfides connect cysteine 44/cysteine 53 and cysteine 67/cysteine 73.

Belongs to the plant rapid alkalinization factor (RALF) family. As to expression, expressed in seeds and rosettes.

The protein localises to the secreted. In terms of biological role, cell signaling peptide that may regulate plant stress, growth, and development. Mediates a rapid alkalinization of extracellular space by mediating a transient increase in the cytoplasmic Ca(2+) concentration leading to a calcium-dependent signaling events through a cell surface receptor and a concomitant activation of some intracellular mitogen-activated protein kinases. In Arabidopsis thaliana (Mouse-ear cress), this protein is Protein RALF-like 21 (RALFL21).